The following is a 557-amino-acid chain: MDLMNGQASNVNIAATASEKSSSSESLSDKGSELKKSFDAVVFDVLKVTPEEYAGQITLMDVPVFKAIQPDELSSCGWNKKEKYSSAPNAVAFTRRFNHVSFWVVREILHAQTLKIRAEVLSHYIKTAKKLYELNNLHALMAVVSGLQSAPIFRLTKTWALLSRKDKTTFEKLEYVMSKEDNYKRLRDYISSLKMTPCIPYLGIYLSDLTYIDSAYPSTGSILENEQRSNLMNNILRIISDLQQSCEYDIPMLPHVQKYLNSVQYIEELQKFVEDDNYKLSLKIEPGTSTPRSAASREDLVGPEVGASPQSGRKSVAAEGALLPQTPPSPRNLIPHGHRKCHSLGYNFIHKMNTAEFKSATFPNAGPRHLLDDSVMEPHAPSRGQAESSTLSSGISIGSSDGSELSEETSWPAFESSAESEDLAVHLYPGAVTIQGVLRRKTLLKEGKKPTVASWTKYWAALCGTQLFYYAAKSLKATERKHFKSTSNKNVSVVGWMVMMADDPEHPDLFLLTDSEKGNSYKFQAGNRMNAMLWFKHLSAACQSNKQQVPTNLMTFE.

A Ras-GEF domain is found at Thr-49 to Gly-287. Positions Lys-283–Lys-314 are disordered. Phosphoserine occurs at positions 293, 296, 308, and 311. Position 326 is a phosphothreonine (Thr-326). Residues Pro-327–Pro-330 carry the PXXP motif. 2 positions are modified to phosphoserine: Ser-329 and Ser-343. Thr-361 is modified (phosphothreonine). The interval Arg-368 to Thr-409 is disordered. Ser-374 is subject to Phosphoserine. Residues Glu-387–Ser-403 show a composition bias toward low complexity. A PH domain is found at Ala-431 to Gln-543. The segment at Thr-433–Glu-557 is required for stimulation of nucleotide exchange by RALA.

Interacts with the SH3 domains of GRB2 and PLCG1. Interacts with RALA.

Its subcellular location is the cytoplasm. It localises to the cell membrane. Functionally, guanine nucleotide exchange factor for the small GTPase RALA. May be involved in cytoskeletal organization. May also be involved in the stimulation of transcription in a Ras-independent fashion. In Macaca fascicularis (Crab-eating macaque), this protein is Ras-specific guanine nucleotide-releasing factor RalGPS2 (RALGPS2).